We begin with the raw amino-acid sequence, 173 residues long: NADH-ubiquinone oxidoreductase chain 6 (173 aa).

A run of 5 helical transmembrane segments spans residues 1–21 (MTYFVFFLSLCFVLGGLAVAS), 27–47 (YGVVGLVLASVAGCGWLLSLG), 48–68 (VSFVSLVLFMVYLGGMLVVFV), 91–111 (GVGFVGVLVMGLVVGGFIGCL), and 141–161 (VGMFLVAGWGLLLTLFVVLEL).

The protein belongs to the complex I subunit 6 family.

Its subcellular location is the mitochondrion membrane. It catalyses the reaction a ubiquinone + NADH + 5 H(+)(in) = a ubiquinol + NAD(+) + 4 H(+)(out). Core subunit of the mitochondrial membrane respiratory chain NADH dehydrogenase (Complex I) that is believed to belong to the minimal assembly required for catalysis. Complex I functions in the transfer of electrons from NADH to the respiratory chain. The immediate electron acceptor for the enzyme is believed to be ubiquinone. The chain is NADH-ubiquinone oxidoreductase chain 6 (MT-ND6) from Fratercula arctica (Atlantic puffin).